A 730-amino-acid chain; its full sequence is Hepatocyte growth factor (730 aa).

The signal sequence occupies residues 1–31; it reads MWVTKLLPLLVLQQLLLHLLLLPVAVPRAEG. At Q32 the chain carries Pyrrolidone carboxylic acid. The PAN domain occupies 37-123; the sequence is NTLHEFKKSA…HEFDLYENKD (87 aa). Intrachain disulfides connect C70–C96, C74–C84, C128–C206, C149–C189, C177–C201, C211–C288, C232–C271, and C260–C283. 2 consecutive Kringle domains span residues 128 to 206 and 211 to 288; these read CIIG…IPQC and CMTC…IKMC. An N-linked (GlcNAc...) asparagine glycan is attached at N294. Disulfide bonds link C305–C383, C326–C365, C354–C377, C391–C469, C412–C452, C440–C464, C487–C606, C519–C535, C614–C681, C644–C660, and C671–C699. 2 consecutive Kringle domains span residues 305 to 383 and 391 to 469; these read CIQG…IPKC and CYRG…IFRC. N402 carries an N-linked (GlcNAc...) asparagine glycan. The region spanning 495–723 is the Peptidase S1 domain; that stretch reads VVNGIPTRTN…YAKWIHKIIL (229 aa). 2 N-linked (GlcNAc...) asparagine glycosylation sites follow: N568 and N655.

This sequence belongs to the peptidase S1 family. Plasminogen subfamily. In terms of assembly, dimer of an alpha chain and a beta chain linked by a disulfide bond. Interacts with SRPX2; the interaction increases HGF mitogenic activity. The single-chain precursor undergoes proteolytic processing by TMPRSS13 resulting in an active two-chain form. The single-chain precursor undergoes proteolytic processing by HGFAC resulting in an active two-chain form.

In terms of biological role, potent mitogen for mature parenchymal hepatocyte cells, seems to be a hepatotrophic factor, and acts as a growth factor for a broad spectrum of tissues and cell types. Activating ligand for the receptor tyrosine kinase MET by binding to it and promoting its dimerization. Activates MAPK signaling following TMPRSS13 cleavage and activation. In Canis lupus familiaris (Dog), this protein is Hepatocyte growth factor (HGF).